A 514-amino-acid chain; its full sequence is piRNA biogenesis protein EXD1 (514 aa).

One can recognise a 3'-5' exonuclease domain in the interval 30–122 (LHAERTWMEK…HGKLCWLQVA (93 aa)). Residues 384-422 (SLNKQATNPQHLPPTEEGETSEDSSNKLICTKSKGSEDQ) are disordered.

Belongs to the EXD1 family. In terms of assembly, homodimer. Component of the PET complex, at least composed of EXD1, PIWIL2, TDRD12 and piRNAs.

Its subcellular location is the cytoplasm. In terms of biological role, RNA-binding component of the PET complex, a multiprotein complex required for the processing of piRNAs during spermatogenesis. The piRNA metabolic process mediates the repression of transposable elements during meiosis by forming complexes composed of piRNAs and Piwi proteins and governs the methylation and subsequent repression of transposable elements, preventing their mobilization, which is essential for the germline integrity. The PET complex is required during the secondary piRNAs metabolic process for the PIWIL2 slicing-triggered loading of PIWIL4 piRNAs. In the PET complex, EXD1 probably acts as an RNA adapter. EXD1 is an inactive exonuclease. This is piRNA biogenesis protein EXD1 (EXD1) from Homo sapiens (Human).